The following is a 318-amino-acid chain: Protein W (318 aa).

Disordered regions lie at residues 1 to 23 (MDQD…GGRE) and 38 to 318 (SEPT…KKGA). Positions 7-20 (ILKEDSEVEREAPG) are enriched in basic and acidic residues. Over residues 50 to 59 (LHNTINTPQG) the composition is skewed to polar residues. The residue at position 68 (Ser68) is a Phosphoserine; by host. Basic and acidic residues predominate over residues 83–101 (RSGEESRVSGRTSKPEAEA). Ser125 bears the Phosphoserine; by host mark. A compositionally biased stretch (basic and acidic residues) spans 150–168 (GIEDENREMAAHPDKRGED). Over residues 191–206 (ASNNGRSMEPGSSHSA) the composition is skewed to polar residues. Ser192, Ser249, Ser257, and Ser260 each carry phosphoserine; by host.

The polypeptide is Protein W (P/V/C) (Sendai virus (strain Fushimi) (SeV)).